The sequence spans 105 residues: Large ribosomal subunit protein bL21 (105 aa).

It belongs to the bacterial ribosomal protein bL21 family. Part of the 50S ribosomal subunit. Contacts protein L20.

In terms of biological role, this protein binds to 23S rRNA in the presence of protein L20. The sequence is that of Large ribosomal subunit protein bL21 from Natranaerobius thermophilus (strain ATCC BAA-1301 / DSM 18059 / JW/NM-WN-LF).